Consider the following 398-residue polypeptide: MAAAVTVEEVRRAQRAEGPATVLAIGTATPANCVYQADYPDYYFRITKSEHMVELKEKFKRMCDKSQIRKRYMHLTEEILQENPNMCAYMAPSLDARQDIVVVEVPKLGKAAAQKAIKEWGQPRSRITHLVFCTTSGVDMPGADYQLAKMLGLRPNVNRLMMYQQGCFAGGTVLRVAKDLAENNRGARVLAVCSEITAVTFRGPSESHLDSMVGQALFGDGAAAVIVGSDPDEAVERPLFQMVSASQTILPDSEGAIDGHLREVGLTFHLLKDVPGLISKNIERALGDAFTPLGISDWNSIFWVAHPGGPAILDQVEAKVGLDKERMRATRHVLSEYGNMSSACVLFILDEMRKRSAEDGHATTGEGMDWGVLFGFGPGLTVETVVLHSVPITAGAAA.

Position 58-65 (58-65 (KFKRMCDK)) interacts with CoA. Cys167 acts as the Acyl-thioester intermediate in catalysis. Substrate contacts are provided by residues Thr200 and 219-220 (GD). A CoA-binding site is contributed by Ala311.

Belongs to the thiolase-like superfamily. Chalcone/stilbene synthases family. As to quaternary structure, homodimer.

The enzyme catalyses (E)-4-coumaroyl-CoA + 3 malonyl-CoA + 3 H(+) = 2',4,4',6'-tetrahydroxychalcone + 3 CO2 + 4 CoA. It participates in secondary metabolite biosynthesis; flavonoid biosynthesis. Its function is as follows. The primary product of this enzyme is 4,2',4',6'-tetrahydroxychalcone (also termed naringenin-chalcone or chalcone) which can under specific conditions spontaneously isomerize into naringenin. This chain is Chalcone synthase 1 (CHS1), found in Oryza sativa subsp. japonica (Rice).